A 472-amino-acid chain; its full sequence is Argininosuccinate lyase (472 aa).

Belongs to the lyase 1 family. Argininosuccinate lyase subfamily.

The protein resides in the cytoplasm. The enzyme catalyses 2-(N(omega)-L-arginino)succinate = fumarate + L-arginine. It participates in amino-acid biosynthesis; L-arginine biosynthesis; L-arginine from L-ornithine and carbamoyl phosphate: step 3/3. The chain is Argininosuccinate lyase from Rhodococcus jostii (strain RHA1).